Reading from the N-terminus, the 1184-residue chain is DNA-directed RNA polymerase subunit beta (1184 aa).

A disordered region spans residues 1160-1184 (DDDFTNQNDAFNIVQPENAAAEKTE).

The protein belongs to the RNA polymerase beta chain family. In terms of assembly, the RNAP catalytic core consists of 2 alpha, 1 beta, 1 beta' and 1 omega subunit. When a sigma factor is associated with the core the holoenzyme is formed, which can initiate transcription.

The catalysed reaction is RNA(n) + a ribonucleoside 5'-triphosphate = RNA(n+1) + diphosphate. Functionally, DNA-dependent RNA polymerase catalyzes the transcription of DNA into RNA using the four ribonucleoside triphosphates as substrates. In Listeria monocytogenes serotype 4b (strain F2365), this protein is DNA-directed RNA polymerase subunit beta.